Here is a 665-residue protein sequence, read N- to C-terminus: Pentatricopeptide repeat-containing protein At1g04840 (665 aa).

PPR repeat units lie at residues 90 to 124, 125 to 155, 160 to 190, 195 to 229, 230 to 256, 257 to 291, 292 to 326, 327 to 357, 358 to 392, 393 to 423, and 429 to 459; these read NPFV…GVKP, DRLT…TLKN, DSFV…SPDR, SILI…NSGS, WSTL…MPEK, NVVS…GLKP, NEYT…GIKL, DRAI…MNHK, DILS…GEKP, DEVV…MRLD, and TLKH…MPIN. A type E motif region spans residues 464-539; the sequence is TWAALYRACK…SLGWSYIELD (76 aa). The type E(+) motif stretch occupies residues 540–570; sequence GQLNKFSAGDYSHKLTQEIGLKLDEIISLAI. Residues 571-665 are type DYW motif; sequence QKGYNPGADW…DGRCSCGDYW (95 aa).

It belongs to the PPR family. PCMP-H subfamily.

The chain is Pentatricopeptide repeat-containing protein At1g04840 (PCMP-H64) from Arabidopsis thaliana (Mouse-ear cress).